We begin with the raw amino-acid sequence, 401 residues long: Argininosuccinate synthase (401 aa).

ATP contacts are provided by residues 9–17 and Ala-35; that span reads AYSGGLDTS. L-citrulline is bound at residue Tyr-86. Gly-116 is a binding site for ATP. L-aspartate is bound by residues Thr-118, Asn-122, and Asp-123. Asn-122 contributes to the L-citrulline binding site. Residues Arg-126, Ser-175, Ser-184, Glu-261, and Tyr-273 each contribute to the L-citrulline site.

This sequence belongs to the argininosuccinate synthase family. Type 1 subfamily. Homotetramer.

It is found in the cytoplasm. The enzyme catalyses L-citrulline + L-aspartate + ATP = 2-(N(omega)-L-arginino)succinate + AMP + diphosphate + H(+). The protein operates within amino-acid biosynthesis; L-arginine biosynthesis; L-arginine from L-ornithine and carbamoyl phosphate: step 2/3. This is Argininosuccinate synthase from Aquifex aeolicus (strain VF5).